Consider the following 212-residue polypeptide: MADFKIVISDPASKKVVPAKVKVKLVDNVQSEEGEKEGRTLPVCLVNPKTKEKLGADQFITVEIQKQEGDKKVKVKVHFIARESAEVPEGEIHASKGLTEKFGAEEFEAVAYRTKSFQLNVDQGQVNLVGSKIGDNFTLSVGGIALNLAITGGSDNTGFPMRPDVQGAAKRRILLAGPPGFIPTEDGERRRKIVRGNVISAENVQINCVIVR.

Belongs to the eukaryotic ribosomal protein eS6 family.

The chain is Small ribosomal subunit protein eS6 from Metallosphaera sedula (strain ATCC 51363 / DSM 5348 / JCM 9185 / NBRC 15509 / TH2).